Consider the following 362-residue polypeptide: Phospho-N-acetylmuramoyl-pentapeptide-transferase (362 aa).

Helical transmembrane passes span 28–48 (IISF…VITW), 72–92 (TPTM…MVCA), 94–114 (LSNI…ILGL), 131–151 (VLHK…IIFM), 169–189 (FMPQ…VGTS), 200–220 (GLAI…AWIS), 236–256 (FSGE…GFLW), 264–284 (IFMG…IAVL), 290–310 (LLLI…LQVI), and 339–359 (IIVR…ITLK).

Belongs to the glycosyltransferase 4 family. MraY subfamily. Requires Mg(2+) as cofactor.

The protein localises to the cell inner membrane. The catalysed reaction is UDP-N-acetyl-alpha-D-muramoyl-L-alanyl-gamma-D-glutamyl-meso-2,6-diaminopimeloyl-D-alanyl-D-alanine + di-trans,octa-cis-undecaprenyl phosphate = di-trans,octa-cis-undecaprenyl diphospho-N-acetyl-alpha-D-muramoyl-L-alanyl-D-glutamyl-meso-2,6-diaminopimeloyl-D-alanyl-D-alanine + UMP. The protein operates within cell wall biogenesis; peptidoglycan biosynthesis. Its function is as follows. Catalyzes the initial step of the lipid cycle reactions in the biosynthesis of the cell wall peptidoglycan: transfers peptidoglycan precursor phospho-MurNAc-pentapeptide from UDP-MurNAc-pentapeptide onto the lipid carrier undecaprenyl phosphate, yielding undecaprenyl-pyrophosphoryl-MurNAc-pentapeptide, known as lipid I. The protein is Phospho-N-acetylmuramoyl-pentapeptide-transferase of Blochmanniella pennsylvanica (strain BPEN).